The primary structure comprises 413 residues: N-acylneuraminate cytidylyltransferase (413 aa).

It belongs to the CMP-NeuNAc synthase family. Mg(2+) serves as cofactor. The cofactor is Mn(2+).

The protein localises to the cytoplasm. It carries out the reaction an N-acylneuraminate + CTP = a CMP-N-acyl-beta-neuraminate + diphosphate. Functionally, catalyzes the formation of CMP-N-acetylneuraminic acid (CMP-NeuNAc), which is essential for the formation of the capsule. This Streptococcus agalactiae serotype Ia (strain ATCC 27591 / A909 / CDC SS700) protein is N-acylneuraminate cytidylyltransferase (neuA).